The primary structure comprises 278 residues: Digeranylgeranylglyceryl phosphate synthase (278 aa).

The next 7 membrane-spanning stretches (helical) occupy residues 12–32, 34–54, 92–112, 129–149, 199–219, 221–241, and 257–277; these read LKNC…ASNF, FGAL…CGFG, IMIF…MAVL, IIGN…GGIA, IYIS…PYLT, IFGI…LAGF, and SKNI…GSIF.

It belongs to the UbiA prenyltransferase family. DGGGP synthase subfamily. Requires Mg(2+) as cofactor.

It is found in the cell membrane. The enzyme catalyses sn-3-O-(geranylgeranyl)glycerol 1-phosphate + (2E,6E,10E)-geranylgeranyl diphosphate = 2,3-bis-O-(geranylgeranyl)-sn-glycerol 1-phosphate + diphosphate. Its pathway is membrane lipid metabolism; glycerophospholipid metabolism. Functionally, prenyltransferase that catalyzes the transfer of the geranylgeranyl moiety of geranylgeranyl diphosphate (GGPP) to the C2 hydroxyl of (S)-3-O-geranylgeranylglyceryl phosphate (GGGP). This reaction is the second ether-bond-formation step in the biosynthesis of archaeal membrane lipids. The polypeptide is Digeranylgeranylglyceryl phosphate synthase (Methanococcus vannielii (strain ATCC 35089 / DSM 1224 / JCM 13029 / OCM 148 / SB)).